The chain runs to 432 residues: Adenylosuccinate synthetase (432 aa).

GTP is bound by residues Gly13–Lys19 and Gly41–Thr43. Asp14 (proton acceptor) is an active-site residue. Asp14 and Gly41 together coordinate Mg(2+). IMP-binding positions include Asp14–Lys17, Asn39–His42, Thr130, Arg144, Gln225, Thr240, and Arg304. Catalysis depends on His42, which acts as the Proton donor. Residue Ala300–Arg306 coordinates substrate. Residues Arg306, Lys332–Asp334, and Ser415–Gly417 contribute to the GTP site.

Belongs to the adenylosuccinate synthetase family. In terms of assembly, homodimer. It depends on Mg(2+) as a cofactor.

The protein localises to the cytoplasm. It catalyses the reaction IMP + L-aspartate + GTP = N(6)-(1,2-dicarboxyethyl)-AMP + GDP + phosphate + 2 H(+). It functions in the pathway purine metabolism; AMP biosynthesis via de novo pathway; AMP from IMP: step 1/2. Functionally, plays an important role in the de novo pathway of purine nucleotide biosynthesis. Catalyzes the first committed step in the biosynthesis of AMP from IMP. The chain is Adenylosuccinate synthetase from Haemophilus ducreyi (strain 35000HP / ATCC 700724).